A 69-amino-acid chain; its full sequence is Pancreatic propolypeptide YG (69 aa).

The protein belongs to the NPY family.

Its subcellular location is the secreted. In Lophius americanus (American angler), this protein is Pancreatic propolypeptide YG.